The sequence spans 102 residues: Small ribosomal subunit protein bS6 (102 aa).

The protein belongs to the bacterial ribosomal protein bS6 family.

Its function is as follows. Binds together with bS18 to 16S ribosomal RNA. The protein is Small ribosomal subunit protein bS6 of Deinococcus geothermalis (strain DSM 11300 / CIP 105573 / AG-3a).